Here is a 518-residue protein sequence, read N- to C-terminus: Chromosomal replication initiator protein DnaA (518 aa).

The segment at 1–73 is domain I, interacts with DnaA modulators; it reads MTLAEFWPLC…REELAAGRPA (73 aa). Positions 73–180 are domain II; that stretch reads AFVFKPGEGV…DAEEARYEQT (108 aa). The segment at 144–180 is disordered; that stretch reads HEPRQAAGPASRPESAAVAKARTDAQRDAEEARYEQT. The segment covering 164–177 has biased composition (basic and acidic residues); sequence ARTDAQRDAEEARY. The interval 181–397 is domain III, AAA+ region; sequence NLSPDYTFDT…GAFNRVGASS (217 aa). 4 residues coordinate ATP: G225, G227, K228, and T229. The segment at 398 to 518 is domain IV, binds dsDNA; that stretch reads RFMNRPVIDI…YEKLLILIQN (121 aa).

It belongs to the DnaA family. In terms of assembly, oligomerizes as a right-handed, spiral filament on DNA at oriC.

The protein localises to the cytoplasm. Functionally, plays an essential role in the initiation and regulation of chromosomal replication. ATP-DnaA binds to the origin of replication (oriC) to initiate formation of the DNA replication initiation complex once per cell cycle. Binds the DnaA box (a 9 base pair repeat at the origin) and separates the double-stranded (ds)DNA. Forms a right-handed helical filament on oriC DNA; dsDNA binds to the exterior of the filament while single-stranded (ss)DNA is stabiized in the filament's interior. The ATP-DnaA-oriC complex binds and stabilizes one strand of the AT-rich DNA unwinding element (DUE), permitting loading of DNA polymerase. After initiation quickly degrades to an ADP-DnaA complex that is not apt for DNA replication. Binds acidic phospholipids. This Neisseria gonorrhoeae (strain ATCC 700825 / FA 1090) protein is Chromosomal replication initiator protein DnaA.